We begin with the raw amino-acid sequence, 2771 residues long: Kinesin-like protein KIN-12D (2771 aa).

Basic and acidic residues-rich tracts occupy residues 1–13 (MSKETKLSRRDSD) and 40–54 (KNPKHECGSKIDRTP). Disordered regions lie at residues 1–73 (MSKE…TPDK) and 117–139 (YSETNSTQNTPTKSVSKPPGSCY). Residues 118 to 131 (SETNSTQNTPTKSV) show a composition bias toward polar residues. Residues 193–530 (NVQILIRVRP…LKFAQRAKLI (338 aa)) enclose the Kinesin motor domain. An ATP-binding site is contributed by 274–281 (GQTGSGKT). 3 microtubules-binding regions span residues 400 to 404 (SSRSH), 431 to 437 (VDLAGSE), and 479 to 483 (HIPYR). 5 coiled-coil regions span residues 1033–1110 (AATA…NEME), 1267–1331 (ELKQ…MKEK), 1410–1505 (IILL…YVEN), 2108–2390 (ELED…EQVK), and 2512–2677 (RERD…LAQE). Positions 2727–2736 (LKGKAKSRRS) are enriched in basic residues. A disordered region spans residues 2727 to 2771 (LKGKAKSRRSRNPERKMPSMPSPRRSWSQSPRSMSQVPFFSSLDR). The span at 2744-2762 (PSMPSPRRSWSQSPRSMSQ) shows a compositional bias: low complexity.

It belongs to the TRAFAC class myosin-kinesin ATPase superfamily. Kinesin family. KIN-12 subfamily. As to expression, expressed in tissues enriched in dividing cells, such as root meristems, root primordia, and leaf primordia/young leaves.

The protein localises to the cytoplasm. It is found in the cytoskeleton. It localises to the phragmoplast. Functionally, involved in the spatial control of cytokinesis by a proper phragmoplast guidance. This chain is Kinesin-like protein KIN-12D, found in Arabidopsis thaliana (Mouse-ear cress).